The sequence spans 586 residues: Ezrin (586 aa).

An FERM domain is found at 2 to 295; sequence PKPINVRVTT…GNHELYMRRR (294 aa). Lysine 60 bears the N6-acetyllysine mark. The [IL]-x-C-x-x-[DE] motif signature appears at 115–120; that stretch reads IYCPPE. Position 146 is a phosphotyrosine; by PDGFR (tyrosine 146). Residues 244–586 form an interaction with SCYL3 region; that stretch reads EIRNISFNDK…KQRIDEFEAM (343 aa). Positions 302–462 form a coiled coil; the sequence is VQQMKAQARE…QDDLVKTKEE (161 aa). Positions 306 to 338 are disordered; the sequence is KAQAREEKHQKQLERQQLETEKKRRETVEREKE. A compositionally biased stretch (basic and acidic residues) spans 308–338; the sequence is QAREEKHQKQLERQQLETEKKRRETVEREKE. Serine 366 carries the post-translational modification Phosphoserine. Residue tyrosine 478 is modified to Phosphotyrosine. Serine 535 carries the post-translational modification Phosphoserine. Phosphothreonine; by ROCK2 and PKC/PRKCI is present on threonine 567.

In terms of assembly, interacts with PODXL and NHERF2. Found in a complex with EZR, PODXL and NHERF2. Interacts with PALS1. Interacts with MCC, PLEKHG6, SCYL3/PACE1, NHERF1 and TMEM8B. Interacts (when phosphorylated) with FES/FPS. Interacts with dimeric S100P, the interaction may be activating through unmasking of F-actin binding sites. Identified in complexes that contain VIM, EZR, AHNAK, BFSP1, BFSP2, ANK2, PLEC, PRX and spectrin. Detected in a complex composed of at least EZR, AHNAK, PPL and PRX. Interacts with PDPN (via cytoplasmic domain); activates RHOA and promotes epithelial-mesenchymal transition. Interacts with SPN/CD43 cytoplasmic tail, CD44 and ICAM2. Interacts with SLC9A3; interaction targets SLC9A3 to the apical membrane. Interacts with SLC9A1; regulates interactions of SLC9A1 with cytoskeletal and promotes stress fiber formation. Interacts with CLIC5; may work together in a complex which also includes RDX and MYO6 to stabilize linkages between the plasma membrane and subjacent actin cytoskeleton at the base of stereocilia. In terms of processing, phosphorylated by tyrosine-protein kinases. Phosphorylation by ROCK2 suppresses the head-to-tail association of the N-terminal and C-terminal halves resulting in an opened conformation which is capable of actin and membrane-binding. S-nitrosylation is induced by interferon-gamma and oxidatively-modified low-densitity lipoprotein (LDL(ox)) possibly implicating the iNOS-S100A8/9 transnitrosylase complex. Glomerular epithelium cell (podocyte). Expressed in cerebrum, cerebellum and hippocampus (at protein level). Expressed in the small intestine, lung, kidney and ovaries.

It is found in the apical cell membrane. Its subcellular location is the cell projection. The protein resides in the microvillus membrane. The protein localises to the ruffle membrane. It localises to the cytoplasm. It is found in the cell cortex. Its subcellular location is the cytoskeleton. The protein resides in the microvillus. With respect to regulation, a head-to-tail association, of the N-terminal and C-terminal halves results in a closed conformation (inactive form) which is incapable of actin or membrane-binding. In terms of biological role, probably involved in connections of major cytoskeletal structures to the plasma membrane. In epithelial cells, required for the formation of microvilli and membrane ruffles on the apical pole. Along with PLEKHG6, required for normal macropinocytosis. The sequence is that of Ezrin (Ezr) from Rattus norvegicus (Rat).